The sequence spans 120 residues: MDYEFLRDVTGVVKVRMSMGHEVIGHWFNEEVKENLALLDEVEDAARTLKGSERSWQRAGHEYTLWMDGEEVMVRANQLEFAGDEMEEGMNYYDEESLSLCGVEDFLQVVAAYRDFVQQK.

It belongs to the UPF0231 family.

The sequence is that of UPF0231 protein YacL from Escherichia fergusonii (strain ATCC 35469 / DSM 13698 / CCUG 18766 / IAM 14443 / JCM 21226 / LMG 7866 / NBRC 102419 / NCTC 12128 / CDC 0568-73).